The chain runs to 541 residues: Interleukin-18 receptor 1 (541 aa).

The signal sequence occupies residues Met1 to Thr18. 2 disulfide bridges follow: Cys22–Cys41 and Cys43–Cys81. Residues Cys22–Arg329 lie on the Extracellular side of the membrane. Ig-like C2-type domains are found at residues Gly33 to Thr121, Lys133 to Asn212, and Pro220 to Ile312. N-linked (GlcNAc...) asparagine glycans are attached at residues Asn91, Asn102, Asn150, Asn197, Asn203, Asn236, Asn255, and Asn297. 2 disulfide bridges follow: Cys119–Cys158 and Cys140–Cys185. Cys237 and Cys298 are oxidised to a cystine. A helical transmembrane segment spans residues Gly330–Ile350. Residues Tyr351–Ser541 lie on the Cytoplasmic side of the membrane. In terms of domain architecture, TIR spans Lys373–Met520. Residue Glu455 is part of the active site.

This sequence belongs to the interleukin-1 receptor family. As to quaternary structure, forms a ternary complex with IL18 and IL18RAP. Within this complex, IL18R1 is involved in ligand-binding and IL18RAP in signaling leading to NF-kappa-B and JNK activation. Interacts with SLC12A3 in peritoneal macrophages; this interaction is increased by IL18 treatment. In terms of processing, N-glycosylated. N-linked glycosyl chains contribute to ligand recognition and intra-receptor interactions required for formation of an active ternary receptor complex. As to expression, highly expressed in leukocytes, spleen, lung. Also expressed, but at lower levels, in liver, small intestine, colon, prostate, thymus, placenta, and heart. Specifically coexpressed with IL18R1 in Th1 cells.

The protein localises to the membrane. It carries out the reaction NAD(+) + H2O = ADP-D-ribose + nicotinamide + H(+). Functionally, within the IL18 receptor complex, responsible for the binding of the pro-inflammatory cytokine IL18, but not IL1A nor IL1B. Involved in IL18-mediated IFNG synthesis from T-helper 1 (Th1) cells. Contributes to IL18-induced cytokine production, either independently of SLC12A3, or as a complex with SLC12A3. This chain is Interleukin-18 receptor 1, found in Homo sapiens (Human).